Reading from the N-terminus, the 537-residue chain is Immunoglobulin-like domain-containing receptor 1 (537 aa).

Positions 1 to 22 are cleaved as a signal peptide; sequence MGCGLLAAGLLLFTWLPAGCLS. The Ig-like V-type domain maps to 23–161; sequence LLVTVQHTER…TSGDPDKEVK (139 aa). The Extracellular segment spans residues 23 to 166; it reads LLVTVQHTER…DKEVKLIVLH (144 aa). Cys44 and Cys144 are oxidised to a cystine. Residues 167–187 form a helical membrane-spanning segment; it reads WLTVIFIILGALLLLLLIGVC. At 188 to 537 the chain is on the cytoplasmic side; sequence WCQCCPQYCC…SSHSGRSVVI (350 aa). A disordered region spans residues 333-537; that stretch reads PPLIRDPPSS…SSHSGRSVVI (205 aa). Residues 341–357 are compositionally biased toward polar residues; sequence SSRTSNPSHQQRLNAVS. 2 stretches are compositionally biased toward basic and acidic residues: residues 359-380 and 434-444; these read RHCD…RELQ and RRPEPREGAQR. A compositionally biased stretch (basic residues) spans 480–490; it reads QRRHHHRRRRS. A phosphoserine mark is found at Ser490 and Ser492. A compositionally biased stretch (basic and acidic residues) spans 518–530; the sequence is GNVERRLERESSH.

Belongs to the immunoglobulin superfamily. LISCH7 family. As to quaternary structure, homooligomer. Interacts with MARVELD2 and OCLN; the interaction is required to recruit MARVELD2 to tricellular contacts. Interacts (via C-terminus) with TRA2A, TRA2B and SRSF1. Interacts with PLSCR1. As to expression, expressed in the vestibule and in hair cells and supporting cells of the cochlea. Expressed in epithelial tissues. Highly expressed in colon but also detected in small intestine, bladder and lung. In colon, expressed in the upper portion of the crypts (at protein level). Expressed in CCK secretory cells of the proximal small intestine (at protein level). Expressed in the organ of Corti, stria vascularis, utricle and saccule of the inner ear.

It is found in the cell membrane. The protein resides in the cell junction. It localises to the tight junction. The protein localises to the nucleus. Its subcellular location is the cytoplasm. Maintains epithelial barrier function by recruiting MARVELD2/tricellulin to tricellular tight junctions (tTJs). Crucial for normal hearing by maintaining the structural and functional integrity of tTJs, which are critical for the survival of auditory neurosensory HCs. Mediates fatty acids and lipoproteins-stimulated CCK/cholecystokinin secretion in the small intestine. In the inner ear, may regulate alternative pre-mRNA splicing via binding to TRA2A, TRA2B and SRSF1. The chain is Immunoglobulin-like domain-containing receptor 1 from Mus musculus (Mouse).